Reading from the N-terminus, the 89-residue chain is Small ribosomal subunit protein uS15 (89 aa).

This sequence belongs to the universal ribosomal protein uS15 family. As to quaternary structure, part of the 30S ribosomal subunit. Forms a bridge to the 50S subunit in the 70S ribosome, contacting the 23S rRNA.

Functionally, one of the primary rRNA binding proteins, it binds directly to 16S rRNA where it helps nucleate assembly of the platform of the 30S subunit by binding and bridging several RNA helices of the 16S rRNA. Forms an intersubunit bridge (bridge B4) with the 23S rRNA of the 50S subunit in the ribosome. The polypeptide is Small ribosomal subunit protein uS15 (Paramagnetospirillum magneticum (strain ATCC 700264 / AMB-1) (Magnetospirillum magneticum)).